Consider the following 251-residue polypeptide: ATP synthase delta chain, chloroplastic (251 aa).

The transit peptide at 1–64 (MASLQHTTAS…STGGALGARM (64 aa)) directs the protein to the chloroplast.

Belongs to the ATPase delta chain family. As to quaternary structure, F-type ATPases have 2 components, CF(1) - the catalytic core - and CF(0) - the membrane proton channel. CF(1) has five subunits: alpha(3), beta(3), gamma(1), delta(1), epsilon(1). CF(0) has three main subunits: a, b and c.

It is found in the plastid. The protein localises to the chloroplast thylakoid membrane. Its function is as follows. This protein seems to be part of the stalk that links CF(0) to CF(1). It either transmits conformational changes from CF(0) into CF(1) or is implicated in proton conduction. This Pisum sativum (Garden pea) protein is ATP synthase delta chain, chloroplastic (ATPD).